The sequence spans 1357 residues: DNA-directed RNA polymerase subunit beta (1357 aa).

Belongs to the RNA polymerase beta chain family. In terms of assembly, the RNAP catalytic core consists of 2 alpha, 1 beta, 1 beta' and 1 omega subunit. When a sigma factor is associated with the core the holoenzyme is formed, which can initiate transcription.

It catalyses the reaction RNA(n) + a ribonucleoside 5'-triphosphate = RNA(n+1) + diphosphate. In terms of biological role, DNA-dependent RNA polymerase catalyzes the transcription of DNA into RNA using the four ribonucleoside triphosphates as substrates. The polypeptide is DNA-directed RNA polymerase subunit beta (Pseudomonas entomophila (strain L48)).